The following is a 296-amino-acid chain: Ribosomal RNA small subunit methyltransferase H (296 aa).

S-adenosyl-L-methionine is bound by residues 41 to 43 (GGH), Asp-60, Phe-87, Asp-103, and Gln-110.

This sequence belongs to the methyltransferase superfamily. RsmH family.

It localises to the cytoplasm. It carries out the reaction cytidine(1402) in 16S rRNA + S-adenosyl-L-methionine = N(4)-methylcytidine(1402) in 16S rRNA + S-adenosyl-L-homocysteine + H(+). In terms of biological role, specifically methylates the N4 position of cytidine in position 1402 (C1402) of 16S rRNA. The protein is Ribosomal RNA small subunit methyltransferase H of Synechococcus elongatus (strain ATCC 33912 / PCC 7942 / FACHB-805) (Anacystis nidulans R2).